A 656-amino-acid polypeptide reads, in one-letter code: Anion exchange transporter (656 aa).

At 1 to 75 (MTGAKRKKKS…LAFAVLSSVH (75 aa)) the chain is on the cytoplasmic side. The helical transmembrane segment at 76–96 (PVFGLYGSLFPAIIYAIFGMG) threads the bilayer. The Extracellular portion of the chain corresponds to 97 to 144 (HHVATGTFALTSLISANAVERIVPQNMQNLTTQSNTSVLGLSDFEMQR). A helical membrane pass occupies residues 145–165 (IHVAAAVSFLGGVIQVAMFVL). A topological domain (cytoplasmic) is located at residue Gln166. Residues 167-187 (LGSATFVVTEPVISAMTTGAA) traverse the membrane as a helical segment. Over 188–202 (THVVTSQVKYLLGMK) the chain is Extracellular. A helical transmembrane segment spans residues 203–223 (MPYISGPLGFFYIYAYVFENI). Over 224–227 (KSVR) the chain is Cytoplasmic. Residues 228-248 (LEALLLSLLSIVVLVLVKELN) form a helical membrane-spanning segment. At 249 to 254 (EQFKRK) the chain is on the extracellular side. The chain crosses the membrane as a helical span at residues 255-275 (IKVVLPVDLVLIIAASFACYC). Residues 276-306 (TNMENTYGLEVVGHIPQGIPSPRAPPMNILS) lie on the Cytoplasmic side of the membrane. The chain crosses the membrane as a helical span at residues 307-327 (AVITEAFGVALVGYVASLALA). Over 328-343 (QGSAKKFKYSIDDNQE) the chain is Extracellular. Residues 344–364 (FLAHGLSNIVSSFFFCIPSAA) form a helical membrane-spanning segment. The Cytoplasmic segment spans residues 365 to 383 (AMGRTAGLYSTGAKTQVAC). 2 helical membrane-spanning segments follow: residues 384–404 (LISC…LYWL) and 405–425 (PMCV…IQFR). Residues 426–448 (DLKKYWNVDKIDWGIWVSTYVFT) are Extracellular-facing. The helical transmembrane segment at 449–469 (ICFAANVGLLFGVVCTIAIVI) threads the bilayer. At 470–656 (GRFPRAMTVS…LSKLSDHSEV (187 aa)) the chain is on the cytoplasmic side. An STAS domain is found at 492–641 (TEMDSETLQQ…ESVSAAISHI (150 aa)). The membrane targeting stretch occupies residues 641–656 (IHSNKNLSKLSDHSEV).

This sequence belongs to the SLC26A/SulP transporter (TC 2.A.53) family. In terms of tissue distribution, expressed in the thyroid gland (at protein level). Expressed in tonsillar high endothelial venule endothelial cells (HEVEC), placenta and in testis, expressed in a subgroup of basal cells in the epididymal ducts.

It localises to the basolateral cell membrane. The protein resides in the recycling endosome membrane. The protein localises to the apical cell membrane. It is found in the lateral cell membrane. The catalysed reaction is chloride(in) = chloride(out). It catalyses the reaction iodide(out) = iodide(in). The enzyme catalyses bromide(in) = bromide(out). It carries out the reaction oxalate(in) = oxalate(out). The catalysed reaction is nitrate(in) = nitrate(out). It catalyses the reaction sulfate(in) = sulfate(out). The enzyme catalyses thiocyanate(in) = thiocyanate(out). It carries out the reaction D-gluconate(in) = D-gluconate(out). The catalysed reaction is hydrogencarbonate(in) = hydrogencarbonate(out). It catalyses the reaction hydrogencarbonate(in) + chloride(out) = hydrogencarbonate(out) + chloride(in). With respect to regulation, is active at both alkaline and acidic pH. Activity is inhibited by 4,4'-Di-isothiocyanatostilbene-2,2'-disulfonic acid (DIDS - an inhibitor of several anion channels and transporters). Its function is as follows. Acts as an anion channel mediating the transport of chloride, sulfate and oxalate ions. Mediates the transport of bromide, iodide, nitrate, gluconate, thiocyanate and bicarbonate ions. Its permeability towards bicarbonate is weak and increases when pH is above 7. Mediates thiocyanate transport in retinal pigment epithelium cells. Mediates iodide transport in the thyroid gland, playing an important role in the synthesis of thyroid hormones and the maintenance of thyroid function. Although it is an anion channel, according to PubMed:12736153 and PubMed:32119864 it has been shown to exhibit chloride-bicarbonate exchanger activity. The chain is Anion exchange transporter from Homo sapiens (Human).